The primary structure comprises 207 residues: ATP-dependent Clp protease proteolytic subunit (207 aa).

Serine 111 serves as the catalytic Nucleophile. Histidine 136 is an active-site residue.

It belongs to the peptidase S14 family. As to quaternary structure, fourteen ClpP subunits assemble into 2 heptameric rings which stack back to back to give a disk-like structure with a central cavity, resembling the structure of eukaryotic proteasomes. Component of the ClpAP and ClpXP complexes.

Its subcellular location is the cytoplasm. The enzyme catalyses Hydrolysis of proteins to small peptides in the presence of ATP and magnesium. alpha-casein is the usual test substrate. In the absence of ATP, only oligopeptides shorter than five residues are hydrolyzed (such as succinyl-Leu-Tyr-|-NHMec, and Leu-Tyr-Leu-|-Tyr-Trp, in which cleavage of the -Tyr-|-Leu- and -Tyr-|-Trp bonds also occurs).. In terms of biological role, cleaves peptides in various proteins in a process that requires ATP hydrolysis. Has a chymotrypsin-like activity. Plays a major role in the degradation of misfolded proteins. This chain is ATP-dependent Clp protease proteolytic subunit, found in Salmonella enteritidis PT4 (strain P125109).